A 358-amino-acid chain; its full sequence is MTAPALKNDRYLRALAKQPVDRTPVWMMRQAGRYLPEYKEVRGQAGDFMSLCRNTELACEVTMQPLRRFDLDAAILFSDILTIPDAMGLGLYFEAGEGPKFKDPVRSMAAIKNLAVPDMEDELGYVMDAVRAIRRELNGSVPLIGFSGSPWTLATYMVEGGSTKNFSKVKQLMFADPEAMHTLLNVLAESVTQYLNAQIAAGAQSVMIFDTWGGVLSPRDYKAFSLAYMEKIVAGLTREADGRKVPVTLFTKNGGQWLEAMAASGADALGVDWTTDLSDARARVGGQVALQGNMDPSVLYAKPARIEEEVQSILQSYGSGTGHVFNLGHGIHPEVDPEHAAAFIEAIHKYSPAFHSND.

Substrate contacts are provided by residues Arg-29–Arg-33, Asp-79, Tyr-156, Thr-211, and His-329.

It belongs to the uroporphyrinogen decarboxylase family. Homodimer.

Its subcellular location is the cytoplasm. It carries out the reaction uroporphyrinogen III + 4 H(+) = coproporphyrinogen III + 4 CO2. The protein operates within porphyrin-containing compound metabolism; protoporphyrin-IX biosynthesis; coproporphyrinogen-III from 5-aminolevulinate: step 4/4. In terms of biological role, catalyzes the decarboxylation of four acetate groups of uroporphyrinogen-III to yield coproporphyrinogen-III. This chain is Uroporphyrinogen decarboxylase, found in Idiomarina loihiensis (strain ATCC BAA-735 / DSM 15497 / L2-TR).